Consider the following 260-residue polypeptide: Phosphate import ATP-binding protein PstB 1 (260 aa).

Positions 13-255 (ISARDLNVHY…PQHPLTQGYI (243 aa)) constitute an ABC transporter domain. 45 to 52 (GPSGCGKS) lines the ATP pocket.

It belongs to the ABC transporter superfamily. Phosphate importer (TC 3.A.1.7) family. As to quaternary structure, the complex is composed of two ATP-binding proteins (PstB), two transmembrane proteins (PstC and PstA) and a solute-binding protein (PstS).

The protein localises to the cell inner membrane. The catalysed reaction is phosphate(out) + ATP + H2O = ADP + 2 phosphate(in) + H(+). Functionally, part of the ABC transporter complex PstSACB involved in phosphate import. Responsible for energy coupling to the transport system. The polypeptide is Phosphate import ATP-binding protein PstB 1 (Paramagnetospirillum magneticum (strain ATCC 700264 / AMB-1) (Magnetospirillum magneticum)).